The chain runs to 834 residues: Periplasmic nitrate reductase (834 aa).

A signal peptide (tat-type signal) is located at residues 1–29 (MNLTRREFAKANAAAIAAAAAGLPILVRA). A 4Fe-4S Mo/W bis-MGD-type domain is found at 41–97 (LVWNKAPCRFCGTGCSVMVATRDGQVVATHGDIKAEVNRGINCVKGYFLSKIMYGSD). [4Fe-4S] cluster-binding residues include Cys48, Cys51, Cys55, and Cys83. Residues Lys85, Gln152, Asn177, Cys181, 214 to 221 (WGSNMAEM), 245 to 249 (STFEH), 264 to 266 (QTD), Met375, Gln379, Asn485, 511 to 512 (SD), Lys534, Asp561, and 721 to 730 (TGRVLEHWHT) contribute to the Mo-bis(molybdopterin guanine dinucleotide) site. Phe797 lines the substrate pocket. Residues Asn805 and Lys822 each contribute to the Mo-bis(molybdopterin guanine dinucleotide) site.

It belongs to the prokaryotic molybdopterin-containing oxidoreductase family. NasA/NapA/NarB subfamily. Component of the periplasmic nitrate reductase NapAB complex composed of NapA and NapB. The cofactor is [4Fe-4S] cluster. Requires Mo-bis(molybdopterin guanine dinucleotide) as cofactor. Predicted to be exported by the Tat system. The position of the signal peptide cleavage has not been experimentally proven.

It is found in the periplasm. It carries out the reaction 2 Fe(II)-[cytochrome] + nitrate + 2 H(+) = 2 Fe(III)-[cytochrome] + nitrite + H2O. In terms of biological role, catalytic subunit of the periplasmic nitrate reductase complex NapAB. Receives electrons from NapB and catalyzes the reduction of nitrate to nitrite. This is Periplasmic nitrate reductase from Pseudomonas aeruginosa (strain UCBPP-PA14).